A 602-amino-acid chain; its full sequence is MKEYKIENIRNFSIIAHIDHGKSTIADRLLESTSTVEEREMREQLLDSMDLERERGITIKAHPVTMTYLYEGEVYQLNLIDTPGHVDFSYEVSRSLSACEGALLIVDAAQGVQAQSLANVYLALERDLEIIPVLNKIDLPAADPVRIAQQIEDYIGLDTTNIIACSAKTGQGIPAILKAIIDLVPPPKAPAETELKALVFDSHYDPYVGIMVYVRIISGELKKGDRITFMAAKGSSFEVLGIGAFLPKATFIEGSLRPGQVGFFIANLKKVKDVKIGDTVTKTKHPAKTPLEGFKEINPVVFAGIYPIDSSDFDTLKDALGRLQLNDSALTIEQESSHSLGFGFRCGFLGLLHLEIIFERIIREFDLDIIATAPSVIYKVVLKNGKVLDIDNPSGYPDPAIIEHVEEPWVHVNIITPQEYLSNIMNLCLDKRGICVKTEMLDQHRLVLAYELPLNEIVSDFNDKLKSVTKGYGSFDYRLGDYRKGSIIKLEVLINEEPIDAFSCLVHRDKAESRGRSICEKLVDVIPQQLFKIPIQAAINKKVIARETIRALSKNVTAKCYGGDITRKRKLWEKQKKGKKRMKEFGKVSIPNTAFIEVLKLD.

One can recognise a tr-type G domain in the interval 7-188; that stretch reads ENIRNFSIIA…AIIDLVPPPK (182 aa). GTP is bound by residues 19–24 and 135–138; these read DHGKST and NKID.

This sequence belongs to the TRAFAC class translation factor GTPase superfamily. Classic translation factor GTPase family. LepA subfamily.

The protein localises to the cell inner membrane. The catalysed reaction is GTP + H2O = GDP + phosphate + H(+). Required for accurate and efficient protein synthesis under certain stress conditions. May act as a fidelity factor of the translation reaction, by catalyzing a one-codon backward translocation of tRNAs on improperly translocated ribosomes. Back-translocation proceeds from a post-translocation (POST) complex to a pre-translocation (PRE) complex, thus giving elongation factor G a second chance to translocate the tRNAs correctly. Binds to ribosomes in a GTP-dependent manner. The chain is Elongation factor 4 from Chlamydia pneumoniae (Chlamydophila pneumoniae).